The following is a 260-amino-acid chain: Indole-3-glycerol phosphate synthase (260 aa).

This sequence belongs to the TrpC family.

It catalyses the reaction 1-(2-carboxyphenylamino)-1-deoxy-D-ribulose 5-phosphate + H(+) = (1S,2R)-1-C-(indol-3-yl)glycerol 3-phosphate + CO2 + H2O. The protein operates within amino-acid biosynthesis; L-tryptophan biosynthesis; L-tryptophan from chorismate: step 4/5. The chain is Indole-3-glycerol phosphate synthase from Thermoanaerobacter sp. (strain X514).